The sequence spans 178 residues: Adenine phosphoribosyltransferase (178 aa).

Belongs to the purine/pyrimidine phosphoribosyltransferase family. In terms of assembly, homodimer.

Its subcellular location is the cytoplasm. The enzyme catalyses AMP + diphosphate = 5-phospho-alpha-D-ribose 1-diphosphate + adenine. Its pathway is purine metabolism; AMP biosynthesis via salvage pathway; AMP from adenine: step 1/1. In terms of biological role, catalyzes a salvage reaction resulting in the formation of AMP, that is energically less costly than de novo synthesis. This chain is Adenine phosphoribosyltransferase, found in Cereibacter sphaeroides (strain ATCC 17029 / ATH 2.4.9) (Rhodobacter sphaeroides).